We begin with the raw amino-acid sequence, 308 residues long: Glutamyl-Q tRNA(Asp) synthetase (308 aa).

L-glutamate contacts are provided by residues 19–23 (RFAPS) and Glu-55. A 'HIGH' region motif is present at residues 22-32 (PSPSGELHFGS). Zn(2+)-binding residues include Cys-111, Cys-113, Tyr-125, and Cys-129. L-glutamate contacts are provided by Tyr-182 and Arg-200. The short motif at 238 to 242 (KLSKQ) is the 'KMSKS' region element. ATP is bound at residue Lys-241.

The protein belongs to the class-I aminoacyl-tRNA synthetase family. GluQ subfamily. Requires Zn(2+) as cofactor.

Catalyzes the tRNA-independent activation of glutamate in presence of ATP and the subsequent transfer of glutamate onto a tRNA(Asp). Glutamate is transferred on the 2-amino-5-(4,5-dihydroxy-2-cyclopenten-1-yl) moiety of the queuosine in the wobble position of the QUC anticodon. This chain is Glutamyl-Q tRNA(Asp) synthetase, found in Escherichia coli (strain K12 / MC4100 / BW2952).